Here is a 1773-residue protein sequence, read N- to C-terminus: Plexin-2 (1773 aa).

The signal sequence occupies residues 1-19 (MLFIESAFLVLTSLSAAEA). Residues 20 to 436 (ATPFEGGVKQ…MPYGIVMEEL (417 aa)) form the Sema domain. The Extracellular portion of the chain corresponds to 20–1130 (ATPFEGGVKQ…SDHALPSRLS (1111 aa)). N65 is a glycosylation site (N-linked (GlcNAc...) asparagine). 9 cysteine pairs are disulfide-bonded: C83-C90, C117-C125, C239-C341, C255-C292, C310-C328, C439-C456, C445-C479, C448-C465, and C459-C471. A glycan (N-linked (GlcNAc...) asparagine) is linked at N241. Residues 438–480 (TCAHHESCTDCQVSVDPLCQWCHPTQSCTTSSRCSGPLTTQCP) form the PSI 1 domain. An N-linked (GlcNAc...) asparagine glycan is attached at N494. C516 and C538 are joined by a disulfide. N566 is a glycosylation site (N-linked (GlcNAc...) asparagine). In terms of domain architecture, PSI 2 spans 571–608 (DCAGYSTCSTCMSSEFGCQWCSHKCSSSCGSASAKACV). N670 and N693 each carry an N-linked (GlcNAc...) asparagine glycan. Positions 698-739 (SCSNLAADCSSCLALSPSLSCGWCNRKCSHECHESKATAVCD) constitute a PSI 3 domain. IPT/TIG domains follow at residues 741–829 (PKID…FSFV), 831–916 (VSIF…FEYR), and 919–1006 (PSVN…FLMD). N855, N877, N975, and N1007 each carry an N-linked (GlcNAc...) asparagine glycan. The chain crosses the membrane as a helical span at residues 1131–1151 (FLILGLLLFTVITLIVMCLIF). A coiled-coil region spans residues 1150 to 1188 (IFKRRRQEREKEYRKIQLQMENLENNVRKECKQAFAELQ). The Cytoplasmic segment spans residues 1152–1764 (KRRRQEREKE…LHVCLETDNH (613 aa)).

Belongs to the plexin family. As to quaternary structure, interacts with mab-20.

The protein resides in the cell membrane. In terms of biological role, involved as a receptor for mab-20/sema-2a in the formation or stabilization of cell-cell contacts at several stages of epithelial morphogenesis. In early embryonic development, required for proper ventral closure of the epidermis. During male tail morphogenesis, involved in precursor cell sorting and in the formation of distinct sensory rays. Involved in axon guidance of SDQL neurons during neurogenesis. The chain is Plexin-2 (plx-2) from Caenorhabditis briggsae.